Consider the following 425-residue polypeptide: Serine--tRNA ligase (425 aa).

Residue 232-234 coordinates L-serine; it reads TAE. ATP is bound by residues 263-265 and V279; that span reads RRE. E286 serves as a coordination point for L-serine. 350–353 serves as a coordination point for ATP; that stretch reads EVVS. An L-serine-binding site is contributed by T387.

The protein belongs to the class-II aminoacyl-tRNA synthetase family. Type-1 seryl-tRNA synthetase subfamily. Homodimer. The tRNA molecule binds across the dimer.

The protein localises to the cytoplasm. It catalyses the reaction tRNA(Ser) + L-serine + ATP = L-seryl-tRNA(Ser) + AMP + diphosphate + H(+). The catalysed reaction is tRNA(Sec) + L-serine + ATP = L-seryl-tRNA(Sec) + AMP + diphosphate + H(+). The protein operates within aminoacyl-tRNA biosynthesis; selenocysteinyl-tRNA(Sec) biosynthesis; L-seryl-tRNA(Sec) from L-serine and tRNA(Sec): step 1/1. Functionally, catalyzes the attachment of serine to tRNA(Ser). Is also able to aminoacylate tRNA(Sec) with serine, to form the misacylated tRNA L-seryl-tRNA(Sec), which will be further converted into selenocysteinyl-tRNA(Sec). In Methanocorpusculum labreanum (strain ATCC 43576 / DSM 4855 / Z), this protein is Serine--tRNA ligase.